The chain runs to 592 residues: Bifunctional purine biosynthesis protein ADE17 (592 aa).

The MGS-like domain occupies 1 to 147; it reads MANYTKTAIL…KNHARVTILS (147 aa). IMP contacts are provided by residues 35–38, 65–68, 102–103, and 126–127; these read SGGT, RVKT, CN, and DI. The Proton donor/acceptor; for FAICAR cyclization activity role is filled by Lys-138. 5-amino-1-(5-phospho-beta-D-ribosyl)imidazole-4-carboxamide contacts are provided by residues 206-207, His-267, Gly-315, Asp-338, Asn-430, and Arg-450; that span reads RY. His-267 (proton acceptor; for AICAR formyltransferase activity) is an active-site residue. Ile-451 contacts (6R)-10-formyltetrahydrofolate. Residue Phe-541 coordinates 5-amino-1-(5-phospho-beta-D-ribosyl)imidazole-4-carboxamide. Residues Asp-546 and 565–566 contribute to the (6R)-10-formyltetrahydrofolate site; that span reads SV. Arg-588 is a 5-amino-1-(5-phospho-beta-D-ribosyl)imidazole-4-carboxamide binding site.

This sequence belongs to the PurH family. As to quaternary structure, homodimer.

The protein localises to the cytoplasm. It is found in the cytosol. The catalysed reaction is (6R)-10-formyltetrahydrofolate + 5-amino-1-(5-phospho-beta-D-ribosyl)imidazole-4-carboxamide = 5-formamido-1-(5-phospho-D-ribosyl)imidazole-4-carboxamide + (6S)-5,6,7,8-tetrahydrofolate. It carries out the reaction IMP + H2O = 5-formamido-1-(5-phospho-D-ribosyl)imidazole-4-carboxamide. It functions in the pathway purine metabolism; IMP biosynthesis via de novo pathway; 5-formamido-1-(5-phospho-D-ribosyl)imidazole-4-carboxamide from 5-amino-1-(5-phospho-D-ribosyl)imidazole-4-carboxamide (10-formyl THF route): step 1/1. The protein operates within purine metabolism; IMP biosynthesis via de novo pathway; IMP from 5-formamido-1-(5-phospho-D-ribosyl)imidazole-4-carboxamide: step 1/1. Its function is as follows. Bifunctional enzyme that catalyzes the last two steps of purine biosynthesis. Acts as a transformylase that incorporates a formyl group to the AMP analog AICAR (5-amino-1-(5-phospho-beta-D-ribosyl)imidazole-4-carboxamide) to produce the intermediate formyl-AICAR (FAICAR). Also catalyzes the cyclization of FAICAR to IMP. In Saccharomyces cerevisiae (strain ATCC 204508 / S288c) (Baker's yeast), this protein is Bifunctional purine biosynthesis protein ADE17.